Here is a 303-residue protein sequence, read N- to C-terminus: Polyisoprenyl-teichoic acid--peptidoglycan teichoic acid transferase TagU (303 aa).

The Cytoplasmic portion of the chain corresponds to 1–4; it reads MKKK. A helical; Signal-anchor for type II membrane protein membrane pass occupies residues 5 to 25; the sequence is ILFWVLGILGVLIIGGGIYAY. Over 26–303 the chain is Extracellular; that stretch reads NVYSSVSNTL…KLRSHLEVTK (278 aa).

It belongs to the LytR/CpsA/Psr (LCP) family.

The protein resides in the cell membrane. It participates in cell wall biogenesis. Its function is as follows. May catalyze the final step in cell wall teichoic acid biosynthesis, the transfer of the anionic cell wall polymers (APs) from their lipid-linked precursor to the cell wall peptidoglycan (PG). This Bacillus cereus (strain AH820) protein is Polyisoprenyl-teichoic acid--peptidoglycan teichoic acid transferase TagU.